The primary structure comprises 550 residues: Arginine--tRNA ligase (550 aa).

The short motif at 130-140 (ANPTGPIHLGG) is the 'HIGH' region element.

The protein belongs to the class-I aminoacyl-tRNA synthetase family. As to quaternary structure, monomer.

It is found in the cytoplasm. The enzyme catalyses tRNA(Arg) + L-arginine + ATP = L-arginyl-tRNA(Arg) + AMP + diphosphate. This is Arginine--tRNA ligase from Rhodococcus opacus (strain B4).